We begin with the raw amino-acid sequence, 398 residues long: cAMP-dependent protein kinase type 3 (398 aa).

Phosphoserine is present on residues serine 15 and serine 55. The Protein kinase domain maps to 88-342 (FQILRTLGTG…SEDVKNHPWF (255 aa)). Residues 94–102 (LGTGSFGRV) and lysine 117 each bind ATP. The Proton acceptor role is filled by aspartate 211. The 56-residue stretch at 343-398 (NEVIWEKLLARYIETPYEPPIQQGQGDTSQFDRYPEEEFNYGIQGEDPYMDLMKEF) folds into the AGC-kinase C-terminal domain.

This sequence belongs to the protein kinase superfamily. AGC Ser/Thr protein kinase family. cAMP subfamily.

The catalysed reaction is L-seryl-[protein] + ATP = O-phospho-L-seryl-[protein] + ADP + H(+). It carries out the reaction L-threonyl-[protein] + ATP = O-phospho-L-threonyl-[protein] + ADP + H(+). With respect to regulation, activated by cAMP. This Saccharomyces cerevisiae (strain ATCC 204508 / S288c) (Baker's yeast) protein is cAMP-dependent protein kinase type 3 (TPK3).